We begin with the raw amino-acid sequence, 673 residues long: DNA ligase (673 aa).

34-38 (DAAFD) contributes to the NAD(+) binding site. The tract at residues 54 to 73 (LRRPDSPTQRVGGATAPDFA) is disordered. Residues 83-84 (SL) and Glu-114 contribute to the NAD(+) site. Residue Lys-116 is the N6-AMP-lysine intermediate of the active site. Positions 137, 176, 292, and 316 each coordinate NAD(+). Zn(2+) is bound by residues Cys-410, Cys-413, Cys-428, and Cys-433. Residues 594-673 (PAEGPLAGMT…DEFCERYLQG (80 aa)) enclose the BRCT domain.

The protein belongs to the NAD-dependent DNA ligase family. LigA subfamily. The cofactor is Mg(2+). Mn(2+) serves as cofactor.

The enzyme catalyses NAD(+) + (deoxyribonucleotide)n-3'-hydroxyl + 5'-phospho-(deoxyribonucleotide)m = (deoxyribonucleotide)n+m + AMP + beta-nicotinamide D-nucleotide.. In terms of biological role, DNA ligase that catalyzes the formation of phosphodiester linkages between 5'-phosphoryl and 3'-hydroxyl groups in double-stranded DNA using NAD as a coenzyme and as the energy source for the reaction. It is essential for DNA replication and repair of damaged DNA. This is DNA ligase from Symbiobacterium thermophilum (strain DSM 24528 / JCM 14929 / IAM 14863 / T).